Consider the following 78-residue polypeptide: uncharacterized protein (78 aa).

The first 22 residues, methionine 1–alanine 22, serve as a signal peptide directing secretion.

The protein belongs to the BhsA/McbA family.

The protein localises to the periplasm. Its function is as follows. Probably involved in reactive chlorine species (RCS) stress resistance. This is an uncharacterized protein from Escherichia coli (strain K12).